The following is a 272-amino-acid chain: 3-methyl-2-oxobutanoate hydroxymethyltransferase (272 aa).

Mg(2+)-binding residues include D51 and D90. Residues 51–52, D90, and K118 each bind 3-methyl-2-oxobutanoate; that span reads DS. E120 lines the Mg(2+) pocket. The active-site Proton acceptor is E187.

This sequence belongs to the PanB family. Homodecamer; pentamer of dimers. The cofactor is Mg(2+).

Its subcellular location is the cytoplasm. The enzyme catalyses 3-methyl-2-oxobutanoate + (6R)-5,10-methylene-5,6,7,8-tetrahydrofolate + H2O = 2-dehydropantoate + (6S)-5,6,7,8-tetrahydrofolate. Its pathway is cofactor biosynthesis; (R)-pantothenate biosynthesis; (R)-pantoate from 3-methyl-2-oxobutanoate: step 1/2. Functionally, catalyzes the reversible reaction in which hydroxymethyl group from 5,10-methylenetetrahydrofolate is transferred onto alpha-ketoisovalerate to form ketopantoate. This chain is 3-methyl-2-oxobutanoate hydroxymethyltransferase, found in Xylella fastidiosa (strain M23).